We begin with the raw amino-acid sequence, 1328 residues long: ATP-dependent DNA helicase hus2/rqh1 (1328 aa).

Composition is skewed to low complexity over residues 217–236 (NNLP…NDNN) and 244–254 (ASPTPSSVSSQ). Residues 217-254 (NNLPFPRLNNNNTNNNNDNNAIEKRDSASPTPSSVSSQ) are disordered. The Helicase ATP-binding domain occupies 528-707 (INGTLSGKDV…INTLRMENCL (180 aa)). Position 555 to 562 (555 to 562 (AVIEGGAS)) interacts with ATP. A DEAH box motif is present at residues 651–654 (DEAH). Residues 728-876 (LYTELYRFIS…ETKERQRQML (149 aa)) form the Helicase C-terminal domain. The HRDC domain occupies 1115-1195 (IDVMTRCLKD…QKFIDEKEQN (81 aa)). Disordered stretches follow at residues 1224–1247 (EQGF…GDEE) and 1260–1328 (NSQS…QNYR). Residues 1260 to 1269 (NSQSLTQTGS) show a composition bias toward polar residues. Residues 1283–1300 (KSYRHKRGSTSYSRKRKY) are compositionally biased toward basic residues.

Belongs to the helicase family. RecQ subfamily. Interacts with top3.

It localises to the nucleus. It carries out the reaction Couples ATP hydrolysis with the unwinding of duplex DNA by translocating in the 3'-5' direction.. It catalyses the reaction ATP + H2O = ADP + phosphate + H(+). Its function is as follows. ATP-dependent 3'-5' DNA-helicase. Has a role in the repair of UV-induced DNA damage in G2 via recombination-mediated repair. Also has a role in the repair of infrared-induced double DNA strand breaks. The chain is ATP-dependent DNA helicase hus2/rqh1 from Schizosaccharomyces pombe (strain 972 / ATCC 24843) (Fission yeast).